Here is a 1652-residue protein sequence, read N- to C-terminus: Venom factor (1652 aa).

The first 22 residues, M1–G22, serve as a signal peptide directing secretion. Mg(2+) is bound by residues P519, D542, V543, and D545. Disulfide bonds link C547–C808, C616–C651, C684–C711, C685–C718, C698–C719, C864–C1502, C1347–C1478, C1378–C1447, C1495–C1500, C1507–C1579, C1526–C1650, and C1626–C1635. A propeptide spanning residues R657 to S740 is cleaved from the precursor. The interval R661–R739 is C3a-like domain. Positions C684 to C719 constitute an Anaphylatoxin-like domain. Residues E743–S754 form a factor B binding site region. Residues H992–Y1270 constitute a propeptide that is removed on maturation. Positions H992–Y1270 are C3d-like domain. The segment at residues C1000 to Q1003 is a cross-link (isoglutamyl cysteine thioester (Cys-Gln)). The factor H binding site stretch occupies residues V1197 to T1260. Residues C1507–C1650 form the NTR domain.

The protein belongs to the venom complement C3 homolog family. In terms of assembly, heterotrimer of alpha, beta and gamma chains; disulfide-linked. Is active with factor B in the presence of factor D. First processed by the removal of 4 Arg residues by furin-type protease, forming two chains, alpha and gamma/beta precursor, linked by a disulfide bond. Probably, a cobrin-like protease cleaves the C3a-like domain and then the C3d-like domain, generating the mature venom factor (VF). As to expression, expressed by the venom gland.

The protein resides in the secreted. In terms of biological role, complement-activating protein in venom. It is a structural and functional analog of complement component C3b, the activated form of C3. It binds factor B (CFB), which is subsequently cleaved by factor D (CFD) to form the bimolecular complex VF/Bb. VF/Bb is a C3/C5 convertase that cleaves both complement components C3 and C5. Structurally, it resembles the C3b degradation product C3c, which is not able to form a C3/C5 convertase. Unlike C3b/Bb, VF/Bb is a stable complex and completely resistant to the actions of complement regulatory factors H (CFH) and I (CFI). Therefore, VF continuously activates complement resulting in the depletion of complement activity. The chain is Venom factor from Crotalus adamanteus (Eastern diamondback rattlesnake).